The sequence spans 164 residues: Pyruvoyl-dependent arginine decarboxylase (164 aa).

S52 bears the Pyruvic acid (Ser) mark.

It belongs to the PdaD family. It depends on pyruvate as a cofactor.

The catalysed reaction is L-arginine + H(+) = agmatine + CO2. This Methanococcus vannielii (strain ATCC 35089 / DSM 1224 / JCM 13029 / OCM 148 / SB) protein is Pyruvoyl-dependent arginine decarboxylase.